We begin with the raw amino-acid sequence, 452 residues long: UDP-N-acetylmuramoylalanine--D-glutamate ligase (452 aa).

119-125 (GSNGKTT) provides a ligand contact to ATP.

This sequence belongs to the MurCDEF family.

The protein resides in the cytoplasm. It catalyses the reaction UDP-N-acetyl-alpha-D-muramoyl-L-alanine + D-glutamate + ATP = UDP-N-acetyl-alpha-D-muramoyl-L-alanyl-D-glutamate + ADP + phosphate + H(+). The protein operates within cell wall biogenesis; peptidoglycan biosynthesis. In terms of biological role, cell wall formation. Catalyzes the addition of glutamate to the nucleotide precursor UDP-N-acetylmuramoyl-L-alanine (UMA). The chain is UDP-N-acetylmuramoylalanine--D-glutamate ligase from Streptococcus pyogenes serotype M5 (strain Manfredo).